The chain runs to 356 residues: Tyrosine recombinase XerS (356 aa).

Positions 16–121 (IMPWYVLDYY…ALSSLYKYLT (106 aa)) constitute a Core-binding (CB) domain. Positions 169–354 (AFLDYVDKEY…VNDEQKNALD (186 aa)) constitute a Tyr recombinase domain. Active-site residues include arginine 210, lysine 234, histidine 306, arginine 309, and histidine 332. The O-(3'-phospho-DNA)-tyrosine intermediate role is filled by tyrosine 341.

This sequence belongs to the 'phage' integrase family. XerS subfamily.

It localises to the cytoplasm. Its activity is regulated as follows. FtsK is required for recombination. Functionally, site-specific tyrosine recombinase, which acts by catalyzing the cutting and rejoining of the recombining DNA molecules. Essential to convert dimers of the bacterial chromosome into monomers to permit their segregation at cell division. This Streptococcus pyogenes serotype M6 (strain ATCC BAA-946 / MGAS10394) protein is Tyrosine recombinase XerS.